We begin with the raw amino-acid sequence, 581 residues long: MAVAGGPAGKGRDISLAALRRHDPYISRIVDVASQVALYTFGHRANEWEKTDVEGTLFVYSRSASPKHGFTIMNRLSMENRTEPITKDLDFLLQDPFLLYRNARLSIYGIWFYDKEECQRIAELMKNLTQYEQLKAHHGTGAGASPVSLGSGEGKEADILRMLTKAKDEYTKCKTCSEPKQISSSSAIHDNPNLIKPIPVKPSGSRQQRGPRPGQTSDPEPQHLSLTALFGKQDKAPCQEATGPPQTLPLQQQQPEKFPMRQGVVRSLSYEEPRRPSPPVDKQLCPAIQKLMVRSMDLQPLAELPESRPCTDALRAACAGPAQTGSPRSHALAAPGTQKLLQVQSIPGAENRCEPGAPAPASSATTPVSLAQPTRLSSALPPQTPGPRALPRPAPPGPGPGHQPVTGPGEVSPRELLRRLQAVQQEQQLPAPGRPALAAKFPTATLSTRARNPLEPWRDPPPSTEQPAPLLQVLSPQRIPAAATPPPLMSPLVFAQPSWAPPQERSRAPLPPGNQDPAATPTGLLLPLRTPEPPGTPGSALSKLQLQEALLHLIQNDDNFLNIIYEAYLFSLTQAAVKKTL.

Ser-145 is modified (phosphoserine). Disordered stretches follow at residues 181-222 (QISS…PEPQ) and 236-258 (APCQ…PEKF). Residues 204 to 219 (GSRQQRGPRPGQTSDP) are compositionally biased toward polar residues. A compositionally biased stretch (low complexity) spans 244–255 (PPQTLPLQQQQP). Phosphoserine is present on residues Ser-269 and Ser-326. Residues 349-411 (AENRCEPGAP…HQPVTGPGEV (63 aa)) are disordered. Positions 355-367 (PGAPAPASSATTP) are enriched in low complexity. Residue Thr-366 is modified to Phosphothreonine. Over residues 368 to 381 (VSLAQPTRLSSALP) the composition is skewed to polar residues. Residues 382–401 (PQTPGPRALPRPAPPGPGPG) show a composition bias toward pro residues. Residue Ser-412 is modified to Phosphoserine. Residues 427-468 (QQLPAPGRPALAAKFPTATLSTRARNPLEPWRDPPPSTEQPA) are disordered. Ser-475 is modified (phosphoserine). The interval 498–522 (SWAPPQERSRAPLPPGNQDPAATPT) is disordered.

Belongs to the DCP1 family. In terms of assembly, interacts with DCP1A.

Its subcellular location is the cytoplasm. It localises to the nucleus. The enzyme catalyses a 5'-end (N(7)-methyl 5'-triphosphoguanosine)-ribonucleoside in mRNA + H2O = N(7)-methyl-GDP + a 5'-end phospho-ribonucleoside in mRNA + 2 H(+). Its function is as follows. May play a role in the degradation of mRNAs, both in normal mRNA turnover and in nonsense-mediated mRNA decay. May remove the 7-methyl guanine cap structure from mRNA molecules, yielding a 5'-phosphorylated mRNA fragment and 7m-GDP. This is mRNA-decapping enzyme 1B (DCP1B) from Bos taurus (Bovine).